The following is a 443-amino-acid chain: uncharacterized protein (443 aa).

4 consecutive transmembrane segments (helical) span residues 15-35, 38-58, 59-79, and 181-201; these read IYAG…DGLA, LGMA…GPGS, AWQG…LSWL, and VVTA…IPAL. Residues 231 to 270 are 4 X 10 AA approximate repeats; sequence NFGIGNIGNANLGNGNIGNANLGSGNAGFFNFGNGNDGNT.

Belongs to the mycobacterial PPE family.

The protein localises to the cell membrane. This is an uncharacterized protein from Mycobacterium tuberculosis (strain ATCC 25618 / H37Rv).